Reading from the N-terminus, the 293-residue chain is MFTGSIVALVTPMDDKGNVDRASLRKLVDYHVASGTSAIVAVGTTGESATLSHDEHVNVVLQTLELADGRIPVIAGAGANATAEAIALTECFNHCGVVGCLSVTPYYNKPTQEGLYQHFRAIASCTDLPQILYNVPSRTGCDMLPETVARLAQINNIIAIKEATGNLSRVGQIQDLVNDDRFILLSGDDASALDFMCLGGKGVISVTANVAARQMAEMCRLTLAGDVHAARRLNQSLMPLHRDLFIEANPIPVKWATKVLGLIATDTLRLPLTPLSASARPAVERALQHAGVL.

Residue threonine 45 participates in pyruvate binding. Tyrosine 133 (proton donor/acceptor) is an active-site residue. The active-site Schiff-base intermediate with substrate is lysine 161. Isoleucine 204 contacts pyruvate.

It belongs to the DapA family. In terms of assembly, homotetramer; dimer of dimers.

It localises to the cytoplasm. It carries out the reaction L-aspartate 4-semialdehyde + pyruvate = (2S,4S)-4-hydroxy-2,3,4,5-tetrahydrodipicolinate + H2O + H(+). It participates in amino-acid biosynthesis; L-lysine biosynthesis via DAP pathway; (S)-tetrahydrodipicolinate from L-aspartate: step 3/4. Functionally, catalyzes the condensation of (S)-aspartate-beta-semialdehyde [(S)-ASA] and pyruvate to 4-hydroxy-tetrahydrodipicolinate (HTPA). The protein is 4-hydroxy-tetrahydrodipicolinate synthase of Edwardsiella ictaluri (strain 93-146).